Here is a 414-residue protein sequence, read N- to C-terminus: Tyrosine--tRNA ligase (414 aa).

The 'HIGH' region signature appears at 57–66 (PSAPDVHIGH). Residues 241–245 (KMSKS) carry the 'KMSKS' region motif. Lys-244 contributes to the ATP binding site. Residues 352–413 (VPLIDLLVTL…GKRKFAKLSL (62 aa)) enclose the S4 RNA-binding domain.

Belongs to the class-I aminoacyl-tRNA synthetase family. TyrS type 2 subfamily. In terms of assembly, homodimer.

It is found in the cytoplasm. It catalyses the reaction tRNA(Tyr) + L-tyrosine + ATP = L-tyrosyl-tRNA(Tyr) + AMP + diphosphate + H(+). Its function is as follows. Catalyzes the attachment of tyrosine to tRNA(Tyr) in a two-step reaction: tyrosine is first activated by ATP to form Tyr-AMP and then transferred to the acceptor end of tRNA(Tyr). This chain is Tyrosine--tRNA ligase, found in Shouchella clausii (strain KSM-K16) (Alkalihalobacillus clausii).